A 167-amino-acid polypeptide reads, in one-letter code: uncharacterized protein (167 aa).

The stretch at 70–118 forms a coiled coil; it reads KIVELRKAMESIITELAYIKGELKGLQEKGESKVERKEIIEEKIQKAMV. The segment covering 128-155 has biased composition (basic and acidic residues); the sequence is EKEERKPAKESKRREHDVIIPEGKKEER. Residues 128 to 167 are disordered; that stretch reads EKEERKPAKESKRREHDVIIPEGKKEERTDDGEDGLIVCD.

This is an uncharacterized protein from Archaeoglobus fulgidus (strain ATCC 49558 / DSM 4304 / JCM 9628 / NBRC 100126 / VC-16).